The sequence spans 158 residues: NADH-quinone oxidoreductase subunit B 1 (158 aa).

Positions 37, 38, 102, and 132 each coordinate [4Fe-4S] cluster.

This sequence belongs to the complex I 20 kDa subunit family. NDH-1 is composed of 14 different subunits. Subunits NuoB, C, D, E, F, and G constitute the peripheral sector of the complex. Requires [4Fe-4S] cluster as cofactor.

It is found in the cell inner membrane. It catalyses the reaction a quinone + NADH + 5 H(+)(in) = a quinol + NAD(+) + 4 H(+)(out). NDH-1 shuttles electrons from NADH, via FMN and iron-sulfur (Fe-S) centers, to quinones in the respiratory chain. Couples the redox reaction to proton translocation (for every two electrons transferred, four hydrogen ions are translocated across the cytoplasmic membrane), and thus conserves the redox energy in a proton gradient. The protein is NADH-quinone oxidoreductase subunit B 1 of Azoarcus sp. (strain BH72).